A 153-amino-acid chain; its full sequence is Calmodulin-like protein 4 (153 aa).

EF-hand domains are found at residues 8 to 43 (DAIQ…LGTC), 44 to 79 (PTPG…QQKQ), 81 to 116 (DPEN…MGEK), and 117 to 152 (LTPE…PVPD).

It belongs to the calmodulin family. As to quaternary structure, associates with the IMAC/intermicrovillar adhesion complex.

The protein resides in the cell projection. The protein localises to the microvillus. As part of the intermicrovillar adhesion complex/IMAC plays a role in epithelial brush border differentiation, controlling microvilli organization and length. Acts as a light chain for MYO7B and is required for efficient targeting of the IMAC to the tips of border brush microvilli. The chain is Calmodulin-like protein 4 (calml4) from Xenopus tropicalis (Western clawed frog).